Here is a 397-residue protein sequence, read N- to C-terminus: Tryptophan synthase beta chain (397 aa).

Lysine 87 carries the N6-(pyridoxal phosphate)lysine modification.

This sequence belongs to the TrpB family. As to quaternary structure, tetramer of two alpha and two beta chains. Pyridoxal 5'-phosphate is required as a cofactor.

The enzyme catalyses (1S,2R)-1-C-(indol-3-yl)glycerol 3-phosphate + L-serine = D-glyceraldehyde 3-phosphate + L-tryptophan + H2O. It functions in the pathway amino-acid biosynthesis; L-tryptophan biosynthesis; L-tryptophan from chorismate: step 5/5. In terms of biological role, the beta subunit is responsible for the synthesis of L-tryptophan from indole and L-serine. The sequence is that of Tryptophan synthase beta chain from Escherichia coli O157:H7.